We begin with the raw amino-acid sequence, 514 residues long: Synaptic vesicular amine transporter (514 aa).

The Cytoplasmic portion of the chain corresponds to 1-20 (MALSELALVRWLQESRRSRK). A helical membrane pass occupies residues 21–41 (LILFIVFLALLLDNMLLTVVV). Topologically, residues 42–129 (PIIPSYLYSI…EDKDLLNENV (88 aa)) are lumenal, vesicle. N-linked (GlcNAc...) asparagine glycosylation is found at Asn-84 and Asn-91. A disulfide bridge links Cys-117 with Cys-324. A helical membrane pass occupies residues 130-150 (QVGLLFASKATVQLITNPFIG). Residues 151–159 (LLTNRIGYP) are Cytoplasmic-facing. The chain crosses the membrane as a helical span at residues 160-180 (IPIFAGFCIMFVSTIMFAFSS). The Lumenal, vesicle segment spans residues 181–189 (SYAFLLIAR). The chain crosses the membrane as a helical span at residues 190–210 (SLQGIGSSCSSVAGMGMLASV). At 211–219 (YTDDEERGN) the chain is on the cytoplasmic side. The chain crosses the membrane as a helical span at residues 220–242 (VMGIALGGLAMGVLVGPPFGSVL). Serotonin contacts are provided by Leu-228 and Val-232. The Lumenal, vesicle portion of the chain corresponds to 243-248 (YEFVGK). A helical membrane pass occupies residues 249-271 (TAPFLVLAALVLLDGAIQLFVLQ). The Cytoplasmic portion of the chain corresponds to 272-291 (PSRVQPESQKGTPLTTLLKD). Residues 292 to 311 (PYILIAAGSICFANMGIAML) traverse the membrane as a helical segment. 5 residues coordinate serotonin: Asn-305, Ile-308, Glu-312, Phe-334, and Tyr-341. The Lumenal, vesicle portion of the chain corresponds to 312-328 (EPALPIWMMETMCSRKW). Residues 329–352 (QLGVAFLPASISYLIGTNIFGILA) form a helical membrane-spanning segment. Residues 353–357 (HKMGR) are Cytoplasmic-facing. Residues 358–378 (WLCALLGMIIVGVSILCIPFA) form a helical membrane-spanning segment. Residues 379–389 (KNIYGLIAPNF) lie on the Lumenal, vesicle side of the membrane. Residues 390-410 (GVGFAIGMVDSSMMPIMGYLV) form a helical membrane-spanning segment. Asp-399 is a binding site for serotonin. Residues 411–414 (DLRH) lie on the Cytoplasmic side of the membrane. A helical membrane pass occupies residues 415-435 (VSVYGSVYAIADVAFCMGYAI). Tyr-433 contacts serotonin. Residues 436 to 440 (GPSAG) are Lumenal, vesicle-facing. Residues 441–462 (GAIAKAIGFPWLMTIIGIIDIL) form a helical membrane-spanning segment. The Cytoplasmic segment spans residues 463 to 514 (FAPLCFFLRSPPAKEEKMAILMDHNCPIKTKMYTQNNIQSYPIGEDEESESD). Ser-511 and Ser-513 each carry phosphoserine.

It belongs to the major facilitator superfamily. Vesicular transporter family. In terms of assembly, interacts with SLC6A3. As to expression, expressed in neuronal and neuroendocrine tissues. Detected in central and peripheral nervous system in particular in axonal and dendritic processes in dopaminergic cells of substantia nigra, histaminergic neuronal cell bodies of substantia nigra and tuberomammillary nucleus, in ganglion cells of sympathetic glia and in peripheral sympathetic nerve terminals in stomach and duodenum (at protein level). Highly expressed in chromaffin cells of the adrenal medulla and histamine-storing enterochromaffin-like cells of oxyntic mucosa (at protein level).

The protein localises to the cytoplasmic vesicle. It is found in the secretory vesicle. It localises to the synaptic vesicle membrane. Its subcellular location is the secretory vesicle membrane. The protein resides in the cell projection. The protein localises to the axon. It is found in the dendrite. It carries out the reaction serotonin(in) + 2 H(+)(out) = serotonin(out) + 2 H(+)(in). The catalysed reaction is dopamine(in) + 2 H(+)(out) = dopamine(out) + 2 H(+)(in). It catalyses the reaction histamine(in) + 2 H(+)(out) = histamine(out) + 2 H(+)(in). Its activity is regulated as follows. Strongly inhibited by reserpine and tetrabenazine. Also inhibited to a lesser extent by ketanserin and fenfluramine. Reserpine and ketanserin inhibit by blocking the substrate-binding pocket. Tetrabenazine traps SLC18A2/VMAT2 in an occluded conformation and its inhibition is specific to SLC18A2/VMAT2 but not SLC18A1/VMAT1. Functionally, electrogenic antiporter that exchanges one cationic monoamine with two intravesicular protons across the membrane of secretory and synaptic vesicles. Uses the electrochemical proton gradient established by the V-type proton-pump ATPase to accumulate high concentrations of monoamines inside the vesicles prior to their release via exocytosis. Transports a variety of catecholamines such as dopamine, adrenaline and noradrenaline, histamine, and indolamines such as serotonin. Regulates the transvesicular monoaminergic gradient that determines the quantal size. Mediates somatodendritic dopamine release in hippocampal neurons, likely as part of a regulated secretory pathway that integrates retrograde synaptic signals. Acts as a primary transporter for striatal dopamine loading ensuring impulse-dependent release of dopamine at the synaptic cleft. Responsible for histamine and serotonin storage and subsequent corelease from mast cell granules. This chain is Synaptic vesicular amine transporter (SLC18A2), found in Homo sapiens (Human).